Consider the following 238-residue polypeptide: ATP synthase subunit a (238 aa).

A run of 5 helical transmembrane segments spans residues 16–36 (LIWLSMPLWLLSSMVPMTVLF), 79–99 (GLFMMILMLNLSGNFPFFFPV), 103–123 (FVFGFSFALSIWTCLVLSSLL), 129–149 (GLMSLVPTGCPLILVPFMVVV), and 209–229 (VFGAAEVAIACIQCYIFCVLL).

This sequence belongs to the ATPase A chain family. F-type ATPases have 2 components, CF(1) - the catalytic core - and CF(0) - the membrane proton channel. CF(1) has five subunits: alpha(3), beta(3), gamma(1), delta(1), epsilon(1). CF(0) has three main subunits: a, b and c.

Its subcellular location is the mitochondrion inner membrane. Its function is as follows. Mitochondrial membrane ATP synthase (F(1)F(0) ATP synthase or Complex V) produces ATP from ADP in the presence of a proton gradient across the membrane which is generated by electron transport complexes of the respiratory chain. F-type ATPases consist of two structural domains, F(1) - containing the extramembraneous catalytic core and F(0) - containing the membrane proton channel, linked together by a central stalk and a peripheral stalk. During catalysis, ATP synthesis in the catalytic domain of F(1) is coupled via a rotary mechanism of the central stalk subunits to proton translocation. Key component of the proton channel; it may play a direct role in the translocation of protons across the membrane. This is ATP synthase subunit a (ATP6) from Mytilus edulis (Blue mussel).